The primary structure comprises 325 residues: N-acetyl-gamma-glutamyl-phosphate reductase (325 aa).

Cysteine 135 is a catalytic residue.

It belongs to the NAGSA dehydrogenase family. Type 1 subfamily.

It localises to the cytoplasm. It catalyses the reaction N-acetyl-L-glutamate 5-semialdehyde + phosphate + NADP(+) = N-acetyl-L-glutamyl 5-phosphate + NADPH + H(+). It participates in amino-acid biosynthesis; L-arginine biosynthesis; N(2)-acetyl-L-ornithine from L-glutamate: step 3/4. Functionally, catalyzes the NADPH-dependent reduction of N-acetyl-5-glutamyl phosphate to yield N-acetyl-L-glutamate 5-semialdehyde. The protein is N-acetyl-gamma-glutamyl-phosphate reductase of Flavobacterium johnsoniae (strain ATCC 17061 / DSM 2064 / JCM 8514 / BCRC 14874 / CCUG 350202 / NBRC 14942 / NCIMB 11054 / UW101) (Cytophaga johnsonae).